The following is a 302-amino-acid chain: F-box protein At1g20360 (302 aa).

Residues 1–48 enclose the F-box domain; that stretch reads MNSLPLHLLDQILFRLEPKSLAMMKSTNRTINSHISDPLFESEYFSRL.

This chain is F-box protein At1g20360, found in Arabidopsis thaliana (Mouse-ear cress).